The following is a 254-amino-acid chain: Acetylglutamate kinase (254 aa).

Substrate-binding positions include 40–41 (GG), R62, and N154.

This sequence belongs to the acetylglutamate kinase family. ArgB subfamily.

It localises to the cytoplasm. It carries out the reaction N-acetyl-L-glutamate + ATP = N-acetyl-L-glutamyl 5-phosphate + ADP. It participates in amino-acid biosynthesis; L-arginine biosynthesis; N(2)-acetyl-L-ornithine from L-glutamate: step 2/4. Its function is as follows. Catalyzes the ATP-dependent phosphorylation of N-acetyl-L-glutamate. The polypeptide is Acetylglutamate kinase (Staphylococcus aureus (strain Mu3 / ATCC 700698)).